Reading from the N-terminus, the 149-residue chain is Early lymphoid activation gene protein (149 aa).

Expressed in heart, kidney, lung, and skeletal muscle, with lower levels in pancreas and liver.

May function as an early signal that helps mediate the activation of T-cells. The protein is Early lymphoid activation gene protein (DIAPH2-AS1) of Homo sapiens (Human).